Consider the following 291-residue polypeptide: 4-hydroxy-tetrahydrodipicolinate synthase (291 aa).

Residue threonine 45 coordinates pyruvate. The Proton donor/acceptor role is filled by tyrosine 133. Lysine 161 acts as the Schiff-base intermediate with substrate in catalysis. Isoleucine 203 provides a ligand contact to pyruvate.

Belongs to the DapA family. Homotetramer; dimer of dimers.

The protein resides in the cytoplasm. It carries out the reaction L-aspartate 4-semialdehyde + pyruvate = (2S,4S)-4-hydroxy-2,3,4,5-tetrahydrodipicolinate + H2O + H(+). It participates in amino-acid biosynthesis; L-lysine biosynthesis via DAP pathway; (S)-tetrahydrodipicolinate from L-aspartate: step 3/4. Functionally, catalyzes the condensation of (S)-aspartate-beta-semialdehyde [(S)-ASA] and pyruvate to 4-hydroxy-tetrahydrodipicolinate (HTPA). The polypeptide is 4-hydroxy-tetrahydrodipicolinate synthase (Acidithiobacillus ferrooxidans (strain ATCC 23270 / DSM 14882 / CIP 104768 / NCIMB 8455) (Ferrobacillus ferrooxidans (strain ATCC 23270))).